The chain runs to 206 residues: Small ribosomal subunit protein uS4 (206 aa).

A disordered region spans residues Asn-18–Lys-44. Residues Arg-94–Val-157 form the S4 RNA-binding domain.

Belongs to the universal ribosomal protein uS4 family. In terms of assembly, part of the 30S ribosomal subunit. Contacts protein S5. The interaction surface between S4 and S5 is involved in control of translational fidelity.

One of the primary rRNA binding proteins, it binds directly to 16S rRNA where it nucleates assembly of the body of the 30S subunit. Functionally, with S5 and S12 plays an important role in translational accuracy. This Jannaschia sp. (strain CCS1) protein is Small ribosomal subunit protein uS4.